A 457-amino-acid polypeptide reads, in one-letter code: MTTDEGAKNSRENPTATVAEQGEDVTSKKDRGVLKIVKRVGHGEETPMIGDKVYVHYNGKLSNGKKFDSSHDRNEPFVFSIGKGQVIKAWDIGVATMKKGEICHLLCKPEYAYGATGSLPKIPSNATLFFEIELLDFKGEDLLEDGGIIRRTKRRGEGYSNPNEGARVQIHLEGRCGGRVFDCRDVAFTVGEGEDHDIPIGIDKALEKMQREEQCILHLGPRYGFGEAGKPKFGIEPNAELIYEVTLKSFEKAKESWEMDTKEKLEQAAIVKEKGTLYFKGGKYVQAVIQYGKIVSWLEMEYGLSEKESKASESFLLAAFLNLAMCYLKLREYTKAVECCDKALGLDSANEKGLYRRGEAQLLMNEFESAKGDFEKVLEVNPQNKAARLQIFMCQKKAKEHNERDRRIYANMFKKFAEQDAKEEANKAMSKKTSEGVTNEKLAVSHAVEEEKPEGHV.

Met1 carries the post-translational modification N-acetylmethionine. Positions 1–11 (MTTDEGAKNSR) are enriched in basic and acidic residues. Positions 1–27 (MTTDEGAKNSRENPTATVAEQGEDVTS) are disordered. The residue at position 28 (Lys28) is an N6-acetyllysine. PPIase FKBP-type domains are found at residues 50–138 (GDKV…LDFK) and 165–251 (GARV…KSFE). TPR repeat units follow at residues 268-301 (AAIV…LEME), 317-350 (LAAF…DSAN), and 351-384 (EKGL…NPQN). Positions 423-457 (EEANKAMSKKTSEGVTNEKLAVSHAVEEEKPEGHV) are disordered. The residue at position 445 (Ser445) is a Phosphoserine. Positions 447–457 (AVEEEKPEGHV) are enriched in basic and acidic residues.

As to quaternary structure, part of a heteromultimeric cytoplasmic complex with HSP90AA1, HSPA1A/HSPA1B and steroid receptors. Upon ligand binding dissociates from the complex and FKBP4 takes its place. Interacts with functionally mature heterooligomeric progesterone receptor complexes along with HSP90 and TEBP. Interacts with NR3C1. Interacts with Akt/AKT1 and PHLPP1; enhancing dephosphorylation and subsequent activation of Akt/AKT1. Interacts with IFI44L; this interaction modulates the kinase activity of IKBKB and IKBKE. Interacts with IKBKB and IKBKE. In terms of processing, acetylation impairs ability to promote interaction between Akt/AKT1 and PHLPP1. Deacetylation by SIRT7 promotes interaction between Akt/AKT1 and PHLPP1, leading to suppress Akt/AKT1 activation. Post-translationally, ubiquitinated, leading to degradation in a proteasome-dependent manner. Deubiquitinated by USP49, leading to stabilization.

It localises to the cytoplasm. It is found in the nucleus. It carries out the reaction [protein]-peptidylproline (omega=180) = [protein]-peptidylproline (omega=0). With respect to regulation, inhibited by both FK506 and rapamycin. Functionally, immunophilin protein with PPIase and co-chaperone activities. Component of unligated steroid receptors heterocomplexes through interaction with heat-shock protein 90 (HSP90). Plays a role in the intracellular trafficking of heterooligomeric forms of steroid hormone receptors maintaining the complex into the cytoplasm when unliganded. Acts as a regulator of Akt/AKT1 activity by promoting the interaction between Akt/AKT1 and PHLPP1, thereby enhancing dephosphorylation and subsequent activation of Akt/AKT1. Interacts with IKBKE and IKBKB which facilitates IKK complex assembly leading to increased IKBKE and IKBKB kinase activity, NF-kappaB activation, and IFN production. This Aotus nancymaae (Ma's night monkey) protein is Peptidyl-prolyl cis-trans isomerase FKBP5 (FKBP5).